A 309-amino-acid chain; its full sequence is Glutaminase (309 aa).

Residues S64, N114, E160, N167, Y191, Y243, and V261 each contribute to the substrate site.

Belongs to the glutaminase family. Homotetramer.

The catalysed reaction is L-glutamine + H2O = L-glutamate + NH4(+). This is Glutaminase from Methylorubrum populi (strain ATCC BAA-705 / NCIMB 13946 / BJ001) (Methylobacterium populi).